The following is a 344-amino-acid chain: F-box protein HRT3 (344 aa).

The TPR repeat unit spans residues 14–47 (AIAIWEKGVLKEKDGSMSDAINFYRSALKIHDNV). Positions 98–148 (WILEILPDDILLRIIKKVILMSGESWVNLSMTCSTFSKLCFHDSVPFKTFA) constitute an F-box domain.

As to quaternary structure, interacts with SKP1. Component of the probable SCF(HRT3) complex containing CDC53, SKP1, RBX1 and HRT3.

The protein operates within protein modification; protein ubiquitination. Functionally, substrate recognition component of a SCF (SKP1-CUL1-F-box protein) E3 ubiquitin-protein ligase complex which mediates the ubiquitination and subsequent proteasomal degradation of target proteins. Probably recognizes and binds to phosphorylated target proteins. The protein is F-box protein HRT3 (HRT3) of Saccharomyces cerevisiae (strain ATCC 204508 / S288c) (Baker's yeast).